Here is a 61-residue protein sequence, read N- to C-terminus: Metallothionein-1 (61 aa).

Methionine 1 carries the post-translational modification N-acetylmethionine. The interval 1–29 (MDPNCSCPTGGSCTCAGSCKCKACRCPSC) is beta. A divalent metal cation-binding residues include cysteine 5, cysteine 7, cysteine 13, cysteine 15, cysteine 19, cysteine 21, cysteine 24, cysteine 26, cysteine 29, cysteine 33, cysteine 34, cysteine 36, cysteine 37, cysteine 41, cysteine 44, cysteine 48, cysteine 50, cysteine 57, cysteine 59, and cysteine 60. An alpha region spans residues 30–61 (KKSCCSCCPVGCAKCAQGCVCKGASDKCSCCA).

The protein belongs to the metallothionein superfamily. Type 1 family. Monomer.

In terms of biological role, metallothioneins have a high content of cysteine residues that bind various heavy metals; these proteins are transcriptionally regulated by both heavy metals and glucocorticoids. The protein is Metallothionein-1 (MT1) of Bos taurus (Bovine).